The chain runs to 2210 residues: RNA-directed RNA polymerase L (2210 aa).

An endonuclease region spans residues 26 to 284 (RDIFLSQHHP…SHKDSDVPSC (259 aa)). Residues E51, D89, and E102 each contribute to the Mn(2+) site. Residue K115 is part of the active site. In terms of domain architecture, RdRp catalytic spans 1171-1368 (CDMKMAVNNG…FLSSKLNKFI (198 aa)). D1329 contacts Mg(2+).

It belongs to the Bunyavirales RNA polymerase family. In terms of assembly, homomultimer; the oligomeric structure is essential for the polymerase activity. Interacts with nucleoprotein N. Interacts with protein Z; this interaction inhibits viral transcription and replication, Z partially blocks the product exit tunnel for the releasing nascent RNA product. Requires Mn(2+) as cofactor. Mg(2+) is required as a cofactor.

It is found in the virion. The protein localises to the host cytoplasm. It catalyses the reaction RNA(n) + a ribonucleoside 5'-triphosphate = RNA(n+1) + diphosphate. Functionally, RNA-dependent RNA polymerase, which is responsible for the replication and transcription of the viral RNA genome using antigenomic RNA as an intermediate. During transcription, synthesizes subgenomic RNAs and assures their capping by a cap-snatching mechanism, which involves the endonuclease activity cleaving the host capped pre-mRNAs. These short capped RNAs are then used as primers for viral transcription. The 3'-end of subgenomic mRNAs molecules are heterogeneous and not polyadenylated. The replicase function is to direct synthesis of antigenomic and genomic RNA which are encapsidated and non capped. As a consequence of the use of the same enzyme for both transcription and replication, these mechanisms need to be well coordinated. These processes may be regulated by proteins N and Z in a dose-dependent manner. Z protein inhibits the viral polymerase L und thus the viral transcription and RNA synthesis. The sequence is that of RNA-directed RNA polymerase L from Junin mammarenavirus (JUNV).